A 288-amino-acid chain; its full sequence is Bifunctional protein FolD (288 aa).

NADP(+) contacts are provided by residues 166-168 (GRS), S191, and V232.

This sequence belongs to the tetrahydrofolate dehydrogenase/cyclohydrolase family. Homodimer.

It carries out the reaction (6R)-5,10-methylene-5,6,7,8-tetrahydrofolate + NADP(+) = (6R)-5,10-methenyltetrahydrofolate + NADPH. It catalyses the reaction (6R)-5,10-methenyltetrahydrofolate + H2O = (6R)-10-formyltetrahydrofolate + H(+). Its pathway is one-carbon metabolism; tetrahydrofolate interconversion. In terms of biological role, catalyzes the oxidation of 5,10-methylenetetrahydrofolate to 5,10-methenyltetrahydrofolate and then the hydrolysis of 5,10-methenyltetrahydrofolate to 10-formyltetrahydrofolate. This is Bifunctional protein FolD from Roseiflexus castenholzii (strain DSM 13941 / HLO8).